A 317-amino-acid chain; its full sequence is MKVLWAALLVTFLAGCQAKVEQPVESEPEPELRQQTEWQSGQPWELALGRFWDYLRWVQTLSEQVQEELLSSQVTQELTTLMDETMKELKAYKSELEEQLSPVAEETRARLSKELQAAQARLGADMEDVRSRLVQYRGEVQAMLGQSTEELRARLASHLRKLRKRLLRDADDLQKRLAVYQAGAREGAERGVSAIRERLGPLVEQGRVRAATVGSLAGQPLQERAQAWGERLRARMEEVGSRTRDRLDEVKEQVAEVRAKLEEQAQQISLQAEAFQARLKSWFEPLVEDMQRQWAGLVEKVQAAVGASTAPVPSDNH.

The signal sequence occupies residues Met-1–Ala-18. 8 consecutive repeat copies span residues Thr-80–Ser-101, Pro-102–Gly-123, Ala-124–Gly-145, Gln-146–Leu-167, Arg-168–Glu-189, Arg-190–Ala-211, Thr-212–Arg-233, and Ala-234–Ala-255. Residues Thr-80–Ala-255 are 8 X 22 AA approximate tandem repeats. Methionine sulfoxide is present on Met-143. A Phosphoserine modification is found at Ser-147. The LDL and other lipoprotein receptors binding stretch occupies residues His-158–Arg-168. Leu-162–Arg-165 contacts heparin. A lipid-binding and lipoprotein association region spans residues Ala-210–Met-290. Thr-212 carries O-linked (GalNAc...) threonine glycosylation. Gly-229–Met-236 is a heparin binding site. The interval Gln-266–His-317 is homooligomerization. Residues Arg-278–Met-290 are specificity for association with VLDL.

This sequence belongs to the apolipoprotein A1/A4/E family. In terms of assembly, homotetramer. May interact with ABCA1; functionally associated with ABCA1 in the biogenesis of HDLs. May interact with APP/A4 amyloid-beta peptide; the interaction is extremely stable in vitro but its physiological significance is unclear. May interact with MAPT. May interact with MAP2. In the cerebrospinal fluid, interacts with secreted SORL1. Interacts with PMEL; this allows the loading of PMEL luminal fragment on ILVs to induce fibril nucleation. APOE exists as multiple glycosylated and sialylated glycoforms within cells and in plasma. The extent of glycosylation and sialylation are tissue and context specific. Post-translationally, glycated in plasma VLDL. In terms of processing, phosphorylated by FAM20C in the extracellular medium.

It is found in the secreted. Its subcellular location is the extracellular space. It localises to the extracellular matrix. The protein localises to the extracellular vesicle. The protein resides in the endosome. It is found in the multivesicular body. Functionally, APOE is an apolipoprotein, a protein associating with lipid particles, that mainly functions in lipoprotein-mediated lipid transport between organs via the plasma and interstitial fluids. APOE is a core component of plasma lipoproteins and is involved in their production, conversion and clearance. Apolipoproteins are amphipathic molecules that interact both with lipids of the lipoprotein particle core and the aqueous environment of the plasma. As such, APOE associates with chylomicrons, chylomicron remnants, very low density lipoproteins (VLDL) and intermediate density lipoproteins (IDL) but shows a preferential binding to high-density lipoproteins (HDL). It also binds a wide range of cellular receptors including the LDL receptor/LDLR, the LDL receptor-related proteins LRP1, LRP2 and LRP8 and the very low-density lipoprotein receptor/VLDLR that mediate the cellular uptake of the APOE-containing lipoprotein particles. Finally, APOE also has a heparin-binding activity and binds heparan-sulfate proteoglycans on the surface of cells, a property that supports the capture and the receptor-mediated uptake of APOE-containing lipoproteins by cells. A main function of APOE is to mediate lipoprotein clearance through the uptake of chylomicrons, VLDLs, and HDLs by hepatocytes. APOE is also involved in the biosynthesis by the liver of VLDLs as well as their uptake by peripheral tissues ensuring the delivery of triglycerides and energy storage in muscle, heart and adipose tissues. By participating in the lipoprotein-mediated distribution of lipids among tissues, APOE plays a critical role in plasma and tissues lipid homeostasis. APOE is also involved in two steps of reverse cholesterol transport, the HDLs-mediated transport of cholesterol from peripheral tissues to the liver, and thereby plays an important role in cholesterol homeostasis. First, it is functionally associated with ABCA1 in the biogenesis of HDLs in tissues. Second, it is enriched in circulating HDLs and mediates their uptake by hepatocytes. APOE also plays an important role in lipid transport in the central nervous system, regulating neuron survival and sprouting. In Rhinopithecus roxellana (Golden snub-nosed monkey), this protein is Apolipoprotein E (APOE).